The following is a 155-amino-acid chain: Nascent polypeptide-associated complex subunit beta (155 aa).

Disordered stretches follow at residues 1–35 and 116–155; these read MDQAKLARMQQSVRIGGKGTPRRKVKKVHKSSGAD and LAESYQNMQKNQAGADGKKDDEEDDIPDLVEGENFESNVE. Positions 20–30 are enriched in basic residues; that stretch reads TPRRKVKKVHK. The 66-residue stretch at 33–98 folds into the NAC-A/B domain; it reads GADDKKLQAT…GEEKELTELV (66 aa). Over residues 136–155 the composition is skewed to acidic residues; that stretch reads DEEDDIPDLVEGENFESNVE.

This sequence belongs to the NAC-beta family. As to quaternary structure, part of the nascent polypeptide-associated complex (NAC), consisting of egd2 and egd1. NAC associates with ribosomes via egd1.

It is found in the cytoplasm. Its subcellular location is the nucleus. Functionally, component of the nascent polypeptide-associated complex (NAC), a dynamic component of the ribosomal exit tunnel, protecting the emerging polypeptides from interaction with other cytoplasmic proteins to ensure appropriate nascent protein targeting. The NAC complex also promotes mitochondrial protein import by enhancing productive ribosome interactions with the outer mitochondrial membrane and blocks the inappropriate interaction of ribosomes translating non-secretory nascent polypeptides with translocation sites in the membrane of the endoplasmic reticulum. EGD1 may act as a transcription factor that exert a negative effect on the expression of several genes that are transcribed by RNA polymerase II. This Aspergillus niger (strain ATCC MYA-4892 / CBS 513.88 / FGSC A1513) protein is Nascent polypeptide-associated complex subunit beta (egd1).